A 188-amino-acid chain; its full sequence is Pyridoxal 5'-phosphate synthase subunit PdxT (188 aa).

An L-glutamine-binding site is contributed by 47–49; sequence GES. C79 acts as the Nucleophile in catalysis. L-glutamine-binding positions include R106 and 134-135; that span reads IR. Catalysis depends on charge relay system residues H169 and E171.

It belongs to the glutaminase PdxT/SNO family. In terms of assembly, in the presence of PdxS, forms a dodecamer of heterodimers. Only shows activity in the heterodimer.

The enzyme catalyses aldehydo-D-ribose 5-phosphate + D-glyceraldehyde 3-phosphate + L-glutamine = pyridoxal 5'-phosphate + L-glutamate + phosphate + 3 H2O + H(+). The catalysed reaction is L-glutamine + H2O = L-glutamate + NH4(+). The protein operates within cofactor biosynthesis; pyridoxal 5'-phosphate biosynthesis. Catalyzes the hydrolysis of glutamine to glutamate and ammonia as part of the biosynthesis of pyridoxal 5'-phosphate. The resulting ammonia molecule is channeled to the active site of PdxS. The chain is Pyridoxal 5'-phosphate synthase subunit PdxT from Caldicellulosiruptor saccharolyticus (strain ATCC 43494 / DSM 8903 / Tp8T 6331).